The primary structure comprises 150 residues: 3-hydroxyacyl-[acyl-carrier-protein] dehydratase FabZ (150 aa).

H51 is a catalytic residue.

This sequence belongs to the thioester dehydratase family. FabZ subfamily.

It localises to the cytoplasm. It catalyses the reaction a (3R)-hydroxyacyl-[ACP] = a (2E)-enoyl-[ACP] + H2O. Its function is as follows. Involved in unsaturated fatty acids biosynthesis. Catalyzes the dehydration of short chain beta-hydroxyacyl-ACPs and long chain saturated and unsaturated beta-hydroxyacyl-ACPs. In Legionella pneumophila subsp. pneumophila (strain Philadelphia 1 / ATCC 33152 / DSM 7513), this protein is 3-hydroxyacyl-[acyl-carrier-protein] dehydratase FabZ.